A 185-amino-acid chain; its full sequence is MKTAQELRTGNVVMIGADAMVVQKAEYNKSGRNSAVVKMKFKNLLTGAGMESVYKADDKFDVVVLERKEVTYSYFADPMYVFMDADYNQFEVESEMMGDALHYLEDGMACEVVFYNDKAISVELPTTLVREIIYTEPAVKGDTSSGKVLKNAKLNTGFELQVPLFCNIGDKIEIDTRTHEYRSRA.

The protein belongs to the elongation factor P family.

It localises to the cytoplasm. It functions in the pathway protein biosynthesis; polypeptide chain elongation. Its function is as follows. Involved in peptide bond synthesis. Stimulates efficient translation and peptide-bond synthesis on native or reconstituted 70S ribosomes in vitro. Probably functions indirectly by altering the affinity of the ribosome for aminoacyl-tRNA, thus increasing their reactivity as acceptors for peptidyl transferase. The sequence is that of Elongation factor P from Paraburkholderia xenovorans (strain LB400).